A 294-amino-acid chain; its full sequence is MAIRLYRAYTPGTRNRTVSTFSEITTDKPEKSLINKHHFCKGRNNRGVITCRHKGGGHKQRYRLIDFKRNRHNIIAKVASIEYDPNRNARIALLHYLDGEKRYILHPRSLSVGAIVVSGPMAPIEVGNALPLSTIPLGTAVHNIELRPYCGGQIVRSAGTYAQIVAKEGNFVTVKLPSSEVRMIRKECYATIGQVGNIDASNITLGKAGRSRWLGKRPTVRGVVMNPVDHPHGGGGEGKSPIGRSRPVTPWGKPALGVKTRNPNKYSNPYVLLVVNKVYLTYNLILKYNVEINT.

Residues 224–249 (VMNPVDHPHGGGGEGKSPIGRSRPVT) form a disordered region.

It belongs to the universal ribosomal protein uL2 family. As to quaternary structure, part of the 50S ribosomal subunit.

The protein resides in the plastid. The protein localises to the chloroplast. The protein is Large ribosomal subunit protein uL2c (rpl2) of Porphyra purpurea (Red seaweed).